The primary structure comprises 359 residues: Mineralocorticoid receptor (359 aa).

A DNA-binding region (nuclear receptor) is located at residues 1 to 49 (FKRAVEGQHNYLCAGRNDCIIDKIRRKNCPACRVRKCLQAGMNLGARKS). Residues C13, C19, C29, and C32 each contribute to the Zn(2+) site. An NR C4-type zinc finger spans residues 13–37 (CAGRNDCIIDKIRRKNCPACRVRKC). Residues 48 to 96 (KSKKPGKLKGVNEDSTPTKEGGQTCPGSGGGYLSSGEKELSTSPTNALV) are disordered. The interval 50–107 (KKPGKLKGVNEDSTPTKEGGQTCPGSGGGYLSSGEKELSTSPTNALVPHGPGGGLVTP) is hinge. An NR LBD domain is found at 108–339 (YLPPSICSVL…EFPEMLVEII (232 aa)). Positions 145 and 151 each coordinate 21-hydroxyprogesterone. The aldosterone site is built by N145 and Q151. 2 residues coordinate progesterone: N145 and Q151. Positions 157–160 (KWAK) are important for coactivator binding. 2 residues coordinate 21-hydroxyprogesterone: R192 and T320. Aldosterone-binding residues include R192 and T320. The progesterone site is built by R192 and T320.

This sequence belongs to the nuclear hormone receptor family. NR3 subfamily.

The protein localises to the cytoplasm. The protein resides in the nucleus. Functionally, receptor for both mineralocorticoids (MC) such as cortisol. Binds to mineralocorticoid response elements (MRE) and transactivates target genes. The effect of MC is to increase ion and water transport and thus raise extracellular fluid volume and blood pressure and lower potassium levels. This chain is Mineralocorticoid receptor (nr3c2), found in Oncorhynchus mykiss (Rainbow trout).